Consider the following 142-residue polypeptide: Small ribosomal subunit protein uS12 (142 aa).

This sequence belongs to the universal ribosomal protein uS12 family. In terms of assembly, part of the 30S ribosomal subunit.

With S4 and S5 plays an important role in translational accuracy. Located at the interface of the 30S and 50S subunits. This chain is Small ribosomal subunit protein uS12, found in Methanoculleus marisnigri (strain ATCC 35101 / DSM 1498 / JR1).